Here is a 301-residue protein sequence, read N- to C-terminus: Homoserine O-acetyltransferase (301 aa).

The active-site Acyl-thioester intermediate is cysteine 142. 2 residues coordinate substrate: lysine 163 and serine 192. The active-site Proton acceptor is histidine 235. Glutamate 237 is an active-site residue. Position 249 (arginine 249) interacts with substrate.

The protein belongs to the MetA family.

The protein localises to the cytoplasm. The catalysed reaction is L-homoserine + acetyl-CoA = O-acetyl-L-homoserine + CoA. It functions in the pathway amino-acid biosynthesis; L-methionine biosynthesis via de novo pathway; O-acetyl-L-homoserine from L-homoserine: step 1/1. Its function is as follows. Transfers an acetyl group from acetyl-CoA to L-homoserine, forming acetyl-L-homoserine. The polypeptide is Homoserine O-acetyltransferase (Bacillus subtilis (strain 168)).